A 338-amino-acid chain; its full sequence is 1-aminocyclopropane-1-carboxylate deaminase (338 aa).

K51 carries the N6-(pyridoxal phosphate)lysine modification. Residue S78 is the Nucleophile of the active site.

It belongs to the ACC deaminase/D-cysteine desulfhydrase family. Homotrimer. Pyridoxal 5'-phosphate is required as a cofactor.

It catalyses the reaction 1-aminocyclopropane-1-carboxylate + H2O = 2-oxobutanoate + NH4(+). In terms of biological role, catalyzes a cyclopropane ring-opening reaction, the irreversible conversion of 1-aminocyclopropane-1-carboxylate (ACC) to ammonia and alpha-ketobutyrate. Allows growth on ACC as a nitrogen source. In Pseudomonas syringae pv. syringae (strain B728a), this protein is 1-aminocyclopropane-1-carboxylate deaminase.